Here is a 611-residue protein sequence, read N- to C-terminus: Phosphomethylpyrimidine synthase (611 aa).

Substrate-binding positions include Asn212, Met241, Tyr270, His306, 326–328, 367–370, and Glu406; these read SRG and DGLR. A Zn(2+)-binding site is contributed by His410. Tyr433 is a binding site for substrate. A Zn(2+)-binding site is contributed by His474. Positions 554, 557, and 562 each coordinate [4Fe-4S] cluster.

Belongs to the ThiC family. As to quaternary structure, homodimer. The cofactor is [4Fe-4S] cluster.

The enzyme catalyses 5-amino-1-(5-phospho-beta-D-ribosyl)imidazole + S-adenosyl-L-methionine = 4-amino-2-methyl-5-(phosphooxymethyl)pyrimidine + CO + 5'-deoxyadenosine + formate + L-methionine + 3 H(+). It participates in cofactor biosynthesis; thiamine diphosphate biosynthesis. In terms of biological role, catalyzes the synthesis of the hydroxymethylpyrimidine phosphate (HMP-P) moiety of thiamine from aminoimidazole ribotide (AIR) in a radical S-adenosyl-L-methionine (SAM)-dependent reaction. The protein is Phosphomethylpyrimidine synthase of Bartonella bacilliformis (strain ATCC 35685 / KC583 / Herrer 020/F12,63).